The primary structure comprises 282 residues: Anamorsin homolog (282 aa).

The segment at 1 to 140 (MADLQGKAVL…KPVYEVGAAA (140 aa)) is N-terminal SAM-like domain. The linker stretch occupies residues 141 to 192 (PLKLSFAKKKQSGAAAPAAQVAEVWTIATDDFDDDDLLENDGDELLDAEDLA). 4 residues coordinate [2Fe-2S] cluster: cysteine 203, cysteine 214, cysteine 217, and cysteine 219. The tract at residues 203 to 219 (CEVGAGGKRRACKNCTC) is fe-S binding site A. The [4Fe-4S] cluster site is built by cysteine 243, cysteine 246, cysteine 254, and cysteine 257. 2 short sequence motifs (cx2C motif) span residues 243-246 (CGNC) and 254-257 (CASC). Residues 243-257 (CGNCYLGDAFRCASC) form a fe-S binding site B region.

The protein belongs to the anamorsin family. In terms of assembly, monomer. The cofactor is [2Fe-2S] cluster. [4Fe-4S] cluster is required as a cofactor.

The protein resides in the cytoplasm. It is found in the mitochondrion intermembrane space. In terms of biological role, component of the cytosolic iron-sulfur (Fe-S) protein assembly (CIA) machinery. Required for the maturation of extramitochondrial Fe-S proteins. Part of an electron transfer chain functioning in an early step of cytosolic Fe-S biogenesis, facilitating the de novo assembly of a [4Fe-4S] cluster on the cytosolic Fe-S scaffold complex. Electrons are transferred from NADPH via a FAD- and FMN-containing diflavin oxidoreductase. Together with the diflavin oxidoreductase, also required for the assembly of the diferric tyrosyl radical cofactor of ribonucleotide reductase (RNR), probably by providing electrons for reduction during radical cofactor maturation in the catalytic small subunit. The protein is Anamorsin homolog of Monosiga brevicollis (Choanoflagellate).